The primary structure comprises 190 residues: Pyridoxal 5'-phosphate synthase subunit PdxT (190 aa).

46 to 48 (GES) provides a ligand contact to L-glutamine. Residue cysteine 78 is the Nucleophile of the active site. L-glutamine is bound by residues arginine 108 and 137-138 (IR). Active-site charge relay system residues include histidine 174 and glutamate 176.

Belongs to the glutaminase PdxT/SNO family. In terms of assembly, in the presence of PdxS, forms a dodecamer of heterodimers. Only shows activity in the heterodimer.

The enzyme catalyses aldehydo-D-ribose 5-phosphate + D-glyceraldehyde 3-phosphate + L-glutamine = pyridoxal 5'-phosphate + L-glutamate + phosphate + 3 H2O + H(+). It catalyses the reaction L-glutamine + H2O = L-glutamate + NH4(+). Its pathway is cofactor biosynthesis; pyridoxal 5'-phosphate biosynthesis. Functionally, catalyzes the hydrolysis of glutamine to glutamate and ammonia as part of the biosynthesis of pyridoxal 5'-phosphate. The resulting ammonia molecule is channeled to the active site of PdxS. This chain is Pyridoxal 5'-phosphate synthase subunit PdxT, found in Chloroflexus aurantiacus (strain ATCC 29366 / DSM 635 / J-10-fl).